A 436-amino-acid chain; its full sequence is Capsid protein (436 aa).

The segment at 326–370 is disordered; that stretch reads RDYSQRGTVPTAPSRQQVESEARAPYPKTNRPPTTADILPGDLDS. The span at 330–344 shows a compositional bias: polar residues; sequence QRGTVPTAPSRQQVE.

This sequence belongs to the anelloviridae capsid protein family.

Its subcellular location is the virion. Self-assembles to form an icosahedral capsid with a T=1 symmetry, about 30 nm in diameter, and consisting of 60 capsid proteins. The capsid encapsulates the genomic DNA. Capsid protein is involved in attachment and entry into the host cell. The polypeptide is Capsid protein (Torque teno felis virus (isolate Fc-TTV4)).